The chain runs to 193 residues: Ribonuclease HII (193 aa).

Positions 15–193 (CIVAGIDEAG…PYHRRSFRCC (179 aa)) constitute an RNase H type-2 domain. Residues aspartate 21, glutamate 22, and aspartate 112 each contribute to the a divalent metal cation site.

It belongs to the RNase HII family. Mn(2+) is required as a cofactor. It depends on Mg(2+) as a cofactor.

It is found in the cytoplasm. The enzyme catalyses Endonucleolytic cleavage to 5'-phosphomonoester.. Functionally, endonuclease that specifically degrades the RNA of RNA-DNA hybrids. The chain is Ribonuclease HII from Rickettsia africae (strain ESF-5).